A 1340-amino-acid chain; its full sequence is TSET complex member tstE (1340 aa).

A compositionally biased stretch (low complexity) spans N56–G67. 2 disordered regions span residues N56 to G75 and S110 to Q131. 4 WD repeats span residues V208–K246, D250–I294, G345–N384, and I397–E436. Over residues K1216–Q1251 the composition is skewed to polar residues. The interval K1216–S1340 is disordered. The segment covering E1252–E1275 has biased composition (acidic residues). The span at A1286 to S1318 shows a compositional bias: polar residues. A compositionally biased stretch (low complexity) spans L1328–S1340.

Component of the TSET complex, a heterohexamer composed of tstA, tstB, tstC, tstD, tstE and tstF, which may act in plasma membrane turnover. tstA, tstB, tstC and tstD are likely to be the core complex members with tstE and tstF acting as associated scaffold proteins.

This chain is TSET complex member tstE, found in Dictyostelium discoideum (Social amoeba).